A 500-amino-acid polypeptide reads, in one-letter code: UDP-N-acetylmuramoyl-L-alanyl-D-glutamate--2,6-diaminopimelate ligase (500 aa).

Residues L26, S28, and 43-45 (HQV) each bind UDP-N-acetyl-alpha-D-muramoyl-L-alanyl-D-glutamate. Residue 123–129 (GTNGKTT) participates in ATP binding. Residues N164, 165–166 (TT), S192, Q198, and R200 contribute to the UDP-N-acetyl-alpha-D-muramoyl-L-alanyl-D-glutamate site. The residue at position 232 (K232) is an N6-carboxylysine. Meso-2,6-diaminopimelate contacts are provided by residues R399, 423–426 (DNPR), G474, and E478. The Meso-diaminopimelate recognition motif motif lies at 423 to 426 (DNPR).

Belongs to the MurCDEF family. MurE subfamily. Requires Mg(2+) as cofactor. Carboxylation is probably crucial for Mg(2+) binding and, consequently, for the gamma-phosphate positioning of ATP.

The protein localises to the cytoplasm. It catalyses the reaction UDP-N-acetyl-alpha-D-muramoyl-L-alanyl-D-glutamate + meso-2,6-diaminopimelate + ATP = UDP-N-acetyl-alpha-D-muramoyl-L-alanyl-gamma-D-glutamyl-meso-2,6-diaminopimelate + ADP + phosphate + H(+). Its pathway is cell wall biogenesis; peptidoglycan biosynthesis. Catalyzes the addition of meso-diaminopimelic acid to the nucleotide precursor UDP-N-acetylmuramoyl-L-alanyl-D-glutamate (UMAG) in the biosynthesis of bacterial cell-wall peptidoglycan. This is UDP-N-acetylmuramoyl-L-alanyl-D-glutamate--2,6-diaminopimelate ligase from Actinobacillus pleuropneumoniae serotype 5b (strain L20).